The primary structure comprises 376 residues: Homocitrate synthase (376 aa).

Positions 4 to 259 (WKIIDSTLRE…RRKYKLEMLP (256 aa)) constitute a Pyruvate carboxyltransferase domain. Residue arginine 12 participates in 2-oxoglutarate binding. Position 13 (glutamate 13) interacts with Mg(2+). 2-oxoglutarate is bound at residue histidine 72. Aspartate 92 lines the L-lysine pocket. Arginine 133 is a 2-oxoglutarate binding site. Residues serine 135 and threonine 166 each coordinate L-lysine. Threonine 166 serves as a coordination point for 2-oxoglutarate. 2 residues coordinate Mg(2+): histidine 195 and histidine 197. The active-site Proton acceptor is histidine 292.

It belongs to the alpha-IPM synthase/homocitrate synthase family. Homocitrate synthase LYS20/LYS21 subfamily. Exists in an equilibrium between monomer and homodimer. It depends on Mg(2+) as a cofactor. The cofactor is Mn(2+).

Its subcellular location is the cytoplasm. It carries out the reaction acetyl-CoA + 2-oxoglutarate + H2O = (2R)-homocitrate + CoA + H(+). The catalysed reaction is oxaloacetate + acetyl-CoA + H2O = citrate + CoA + H(+). The protein operates within amino-acid biosynthesis; L-lysine biosynthesis via AAA pathway; L-alpha-aminoadipate from 2-oxoglutarate: step 1/5. With respect to regulation, is highly and competitively inhibited by lysine that binds to the active site and competes with 2-oxoglutarate. Is also slightly inhibited by arginine and 2-aminoethylcysteine. Catalyzes the aldol-type condensation of 2-oxoglutarate with acetyl-CoA to yield homocitrate. Carries out the first step of the alpha-aminoadipate (AAA) lysine biosynthesis pathway. To a lesser extent, can also use oxaloacetate in place of 2-oxoglutarate, leading to citrate. Does not display 2-isopropylmalate synthase activity since it cannot use 2-oxoisovalerate. The protein is Homocitrate synthase of Thermus thermophilus (strain ATCC BAA-163 / DSM 7039 / HB27).